A 213-amino-acid chain; its full sequence is Protein FAM177A1 (213 aa).

Methionine 1 carries the N-acetylmethionine modification. Serine 70 is subject to Phosphoserine. The residue at position 71 (threonine 71) is a Phosphothreonine. Residues 136–173 (IDEYYRMKKEEEEEEEENRMSEEAEKQYQQNKLQTDSI) are a coiled coil. The disordered stretch occupies residues 147–175 (EEEEEENRMSEEAEKQYQQNKLQTDSIVQ). Positions 162 to 175 (QYQQNKLQTDSIVQ) are enriched in polar residues.

It belongs to the FAM177 family.

In Homo sapiens (Human), this protein is Protein FAM177A1 (FAM177A1).